A 404-amino-acid polypeptide reads, in one-letter code: Tyrosine--tRNA ligase (404 aa).

The 'HIGH' region signature appears at 45-54 (PTAPDLHLGH). Residues 229 to 233 (KMSKS) carry the 'KMSKS' region motif. Residue Lys-232 participates in ATP binding. One can recognise an S4 RNA-binding domain in the interval 342-402 (IFIASIVRLA…GKKAIAQVTF (61 aa)).

Belongs to the class-I aminoacyl-tRNA synthetase family. TyrS type 2 subfamily. In terms of assembly, homodimer.

The protein resides in the cytoplasm. It catalyses the reaction tRNA(Tyr) + L-tyrosine + ATP = L-tyrosyl-tRNA(Tyr) + AMP + diphosphate + H(+). Catalyzes the attachment of tyrosine to tRNA(Tyr) in a two-step reaction: tyrosine is first activated by ATP to form Tyr-AMP and then transferred to the acceptor end of tRNA(Tyr). The chain is Tyrosine--tRNA ligase from Acinetobacter baylyi (strain ATCC 33305 / BD413 / ADP1).